Reading from the N-terminus, the 615-residue chain is Mitochondrial distribution and morphology protein 34 (615 aa).

One can recognise an SMP-LTD domain in the interval 1-195 (MAFNFNWSPL…LPAIIHRLSL (195 aa)). 3 disordered regions span residues 293–313 (SDKPDATATPASTPNLHRTSS), 346–566 (ATTG…PQPD), and 596–615 (PAFWEDSHQHDIPPPAYEPR). The segment covering 301 to 313 (TPASTPNLHRTSS) has biased composition (polar residues). Over residues 346-355 (ATTGLSLGSG) the composition is skewed to low complexity. Over residues 356 to 367 (RHSKAGRKKKMR) the composition is skewed to basic residues. Polar residues-rich tracts occupy residues 384 to 403 (IGSTSSQAGDSHTEASTRTP), 435 to 446 (DATTSARASESS), and 457 to 499 (VTAQ…YSSR). Positions 517-557 (QQQQFQQQQQQQQQQQQQQQQQQQQQQQQQQQQQQQQQQQQ) are enriched in low complexity. Over residues 596–606 (PAFWEDSHQHD) the composition is skewed to basic and acidic residues.

This sequence belongs to the MDM34 family. In terms of assembly, component of the ER-mitochondria encounter structure (ERMES) or MDM complex, composed of mmm-1, mdm10, mdm12 and mdm34.

Its subcellular location is the mitochondrion outer membrane. Functionally, component of the ERMES/MDM complex, which serves as a molecular tether to connect the endoplasmic reticulum (ER) and mitochondria. Components of this complex are involved in the control of mitochondrial shape and protein biogenesis, and function in nonvesicular lipid trafficking between the ER and mitochondria. Mdm34 is required for the interaction of the ER-resident membrane protein mmm-1 and the outer mitochondrial membrane-resident beta-barrel protein mdm10. The sequence is that of Mitochondrial distribution and morphology protein 34 from Neurospora crassa (strain ATCC 24698 / 74-OR23-1A / CBS 708.71 / DSM 1257 / FGSC 987).